A 157-amino-acid chain; its full sequence is Large ribosomal subunit protein uL15 (157 aa).

The segment at Met1–Arg41 is disordered. Gly residues predominate over residues Arg21 to Ile35.

This sequence belongs to the universal ribosomal protein uL15 family. Part of the 50S ribosomal subunit.

Functionally, binds to the 23S rRNA. This is Large ribosomal subunit protein uL15 from Jannaschia sp. (strain CCS1).